The primary structure comprises 157 residues: Transcriptional repressor NrdR (157 aa).

A zinc finger lies at 3 to 34 (CPKCNSTHSRVVDSRHADEANAIRRRRECENC). Residues 49–139 (LIVVKKDGTR…VYKEFKDVDQ (91 aa)) enclose the ATP-cone domain.

It belongs to the NrdR family. It depends on Zn(2+) as a cofactor.

Functionally, negatively regulates transcription of bacterial ribonucleotide reductase nrd genes and operons by binding to NrdR-boxes. The polypeptide is Transcriptional repressor NrdR (Staphylococcus carnosus (strain TM300)).